A 216-amino-acid chain; its full sequence is Large ribosomal subunit protein uL3 (216 aa).

Position 157 is an N5-methylglutamine (Gln-157).

Belongs to the universal ribosomal protein uL3 family. Part of the 50S ribosomal subunit. Forms a cluster with proteins L14 and L19. In terms of processing, methylated by PrmB.

In terms of biological role, one of the primary rRNA binding proteins, it binds directly near the 3'-end of the 23S rRNA, where it nucleates assembly of the 50S subunit. This is Large ribosomal subunit protein uL3 from Stenotrophomonas maltophilia (strain R551-3).